The chain runs to 274 residues: Cytochrome b-c1 complex subunit Rieske, mitochondrial (274 aa).

Over Ser-79 to Ser-103 the chain is Mitochondrial matrix. Residues Arg-104 to Met-140 traverse the membrane as a helical segment. Residues Ser-141–Gly-274 lie on the Mitochondrial intermembrane side of the membrane. The region spanning Glu-187–Val-272 is the Rieske domain. [2Fe-2S] cluster contacts are provided by Cys-217, His-219, Cys-236, His-239, and Ser-241. A disulfide bridge connects residues Cys-222 and Cys-238.

The protein belongs to the Rieske iron-sulfur protein family. Component of the ubiquinol-cytochrome c oxidoreductase (cytochrome b-c1 complex, complex III, CIII), a multisubunit enzyme composed of 11 subunits. The complex is composed of 3 respiratory subunits cytochrome b, cytochrome c1 and Rieske protein UQCRFS1, 2 core protein subunits UQCRC1/QCR1 and UQCRC2/QCR2, and 6 low-molecular weight protein subunits UQCRH/QCR6, UQCRB/QCR7, UQCRQ/QCR8, UQCR10/QCR9, UQCR11/QCR10 and subunit 9, the cleavage product of Rieske protein UQCRFS1. The complex exists as an obligatory dimer and forms supercomplexes (SCs) in the inner mitochondrial membrane with NADH-ubiquinone oxidoreductase (complex I, CI) and cytochrome c oxidase (complex IV, CIV), resulting in different assemblies (supercomplex SCI(1)III(2)IV(1) and megacomplex MCI(2)III(2)IV(2)). Incorporation of the Rieske protein UQCRFS1 is the penultimate step in complex III assembly. Interacts with TTC19, which is involved in the clearance of UQCRFS1 fragments. In terms of assembly, component of the ubiquinol-cytochrome c oxidoreductase (cytochrome b-c1 complex, complex III, CIII). Subunit 9 corresponds to the mitochondrial targeting sequence (MTS) of Rieske protein UQCRFS1. It is retained after processing and incorporated inside complex III, where it remains bound to the complex and localizes between the 2 core subunits UQCRC1/QCR1 and UQCRC2/QCR2. It depends on [2Fe-2S] cluster as a cofactor. In terms of processing, proteolytic processing is necessary for the correct insertion of UQCRFS1 in the complex III dimer. Several fragments are generated during UQCRFS1 insertion, most probably due to the endogenous matrix-processing peptidase (MPP) activity of the 2 core protein subunits UQCRC1/QCR1 and UQCRC2/QCR2, which are homologous to the 2 mitochondrial-processing peptidase (MPP) subunits beta-MPP and alpha-MPP respectively. The action of the protease is also necessary for the clearance of the UQCRFS1 fragments.

The protein localises to the mitochondrion inner membrane. The catalysed reaction is a quinol + 2 Fe(III)-[cytochrome c](out) = a quinone + 2 Fe(II)-[cytochrome c](out) + 2 H(+)(out). Component of the ubiquinol-cytochrome c oxidoreductase, a multisubunit transmembrane complex that is part of the mitochondrial electron transport chain which drives oxidative phosphorylation. The respiratory chain contains 3 multisubunit complexes succinate dehydrogenase (complex II, CII), ubiquinol-cytochrome c oxidoreductase (cytochrome b-c1 complex, complex III, CIII) and cytochrome c oxidase (complex IV, CIV), that cooperate to transfer electrons derived from NADH and succinate to molecular oxygen, creating an electrochemical gradient over the inner membrane that drives transmembrane transport and the ATP synthase. The cytochrome b-c1 complex catalyzes electron transfer from ubiquinol to cytochrome c, linking this redox reaction to translocation of protons across the mitochondrial inner membrane, with protons being carried across the membrane as hydrogens on the quinol. In the process called Q cycle, 2 protons are consumed from the matrix, 4 protons are released into the intermembrane space and 2 electrons are passed to cytochrome c. The Rieske protein is a catalytic core subunit containing a [2Fe-2S] iron-sulfur cluster. It cycles between 2 conformational states during catalysis to transfer electrons from the quinol bound in the Q(0) site in cytochrome b to cytochrome c1. Incorporation of UQCRFS1 is the penultimate step in complex III assembly. Its function is as follows. Component of the ubiquinol-cytochrome c oxidoreductase (cytochrome b-c1 complex, complex III, CIII). UQCRFS1 undergoes proteolytic processing once it is incorporated in the complex III dimer. One of the fragments, called subunit 9, corresponds to its mitochondrial targeting sequence (MTS). The proteolytic processing is necessary for the correct insertion of UQCRFS1 in the complex III dimer, but the persistence of UQCRFS1-derived fragments may prevent newly imported UQCRFS1 to be processed and assembled into complex III and is detrimental for the complex III structure and function. In Theropithecus gelada (Gelada baboon), this protein is Cytochrome b-c1 complex subunit Rieske, mitochondrial (UQCRFS1).